A 328-amino-acid polypeptide reads, in one-letter code: D-cysteine desulfhydrase (328 aa).

At Lys51 the chain carries N6-(pyridoxal phosphate)lysine.

This sequence belongs to the ACC deaminase/D-cysteine desulfhydrase family. As to quaternary structure, homodimer. Requires pyridoxal 5'-phosphate as cofactor.

It carries out the reaction D-cysteine + H2O = hydrogen sulfide + pyruvate + NH4(+) + H(+). In terms of biological role, catalyzes the alpha,beta-elimination reaction of D-cysteine and of several D-cysteine derivatives. It could be a defense mechanism against D-cysteine. In Klebsiella pneumoniae subsp. pneumoniae (strain ATCC 700721 / MGH 78578), this protein is D-cysteine desulfhydrase.